The chain runs to 191 residues: GDP-mannose pyrophosphatase (191 aa).

GDP-alpha-D-mannose is bound by residues Tyr17, 38–40, Arg67, and 85–87; these read KRE and AGL. Residues 43–180 form the Nudix hydrolase domain; that stretch reads DRGNGATILL…EIRDGKTVLL (138 aa). 3 residues coordinate Mg(2+): Ala85, Glu100, and Glu104. Residues 86-106 carry the Nudix box motif; that stretch reads GLLDNDEPEVCIRKEAIEETG. GDP-alpha-D-mannose is bound by residues Glu104, Glu127, 150–151, and Lys176; that span reads DE. Glu151 is a Mg(2+) binding site.

It belongs to the Nudix hydrolase family. NudK subfamily. As to quaternary structure, homodimer. It depends on Mg(2+) as a cofactor.

It carries out the reaction GDP-alpha-D-mannose + H2O = alpha-D-mannose 1-phosphate + GMP + 2 H(+). Nucleoside diphosphate sugar hydrolase that hydrolyzes GDP-mannose as its preferred substrate, yielding GMP and mannose-1-phosphate. This chain is GDP-mannose pyrophosphatase (nudK), found in Shigella flexneri serotype 5b (strain 8401).